A 365-amino-acid chain; its full sequence is Flavone synthase (365 aa).

Positions 76, 218, 220, and 276 each coordinate Fe cation. The 102-residue stretch at 194-295 (MEQKVLINYY…RLSIATFQNP (102 aa)) folds into the Fe2OG dioxygenase domain. The tract at residues 345–365 (RLQDEKAKLEMKSKSADENLA) is disordered.

Belongs to the iron/ascorbate-dependent oxidoreductase family. Requires Fe cation as cofactor. L-ascorbate is required as a cofactor.

It localises to the cytoplasm. It catalyses the reaction a flavanone + 2-oxoglutarate + O2 = a flavone + succinate + CO2 + H2O. The protein operates within secondary metabolite biosynthesis; flavonoid biosynthesis. Functionally, involved in the conversion of naringenin to apigenin. Acts via a direct 2,3-desaturation of flavanones instead of a sequential hydroxylation/dehydratation mechanism. This is Flavone synthase (FNSI) from Petroselinum crispum (Parsley).